The chain runs to 493 residues: E3 ubiquitin-protein ligase Hakai (493 aa).

Disordered regions lie at residues 1-20 (MDHNDNDLQGTNSSASLGGL) and 28-61 (IKLISKQTNKTKPAPRAPRAMNRMPAKTQAGDEE). A compositionally biased stretch (polar residues) spans 7 to 16 (DLQGTNSSAS). An RING-type zinc finger spans residues 109–149 (CDKCGLPIKMYGRMIPCKHVFCYDCAILHEKKGDKMCPGCN). Residues 148–206 (CNEPVQRIEQCVRGSLFMCSIVQGCKRTYLSQRDLQAHINHRHMRAGKPVTRPPLEPVH) form an HYB domain region. The C2H2-type zinc-finger motif lies at 164 to 190 (FMCSIVQGCKRTYLSQRDLQAHINHRH). Residues 253 to 493 (YNQPHEDIRP…DQARYRPYYQ (241 aa)) form a disordered region. Pro residues-rich tracts occupy residues 262 to 276 (PPPAEMSMAPPPPRP), 342 to 352 (APPPPPPPPIS), 372 to 389 (APPPPMTSAPPPITPPPG), and 399 to 412 (MNHPPPGPPPPQHG). The segment covering 427–444 (NPNSLPQFSEDQGTLSPP) has biased composition (polar residues). The span at 459–469 (PRGPPPPPRMQ) shows a compositional bias: pro residues. Low complexity predominate over residues 470 to 480 (GPPAQAPLAGP).

Belongs to the Hakai family. As to quaternary structure, homodimer. Interacts with tyrosine-phosphorylated SRC substrates. Component of the WMM complex, a N6-methyltransferase complex composed of a catalytic subcomplex, named MAC, and of an associated subcomplex, named MACOM. Component of the MACOM subcomplex.

It is found in the nucleus speckle. The protein resides in the nucleus. Its subcellular location is the nucleoplasm. It catalyses the reaction S-ubiquitinyl-[E2 ubiquitin-conjugating enzyme]-L-cysteine + [acceptor protein]-L-lysine = [E2 ubiquitin-conjugating enzyme]-L-cysteine + N(6)-ubiquitinyl-[acceptor protein]-L-lysine.. It functions in the pathway protein modification; protein ubiquitination. Its function is as follows. E3 ubiquitin-protein ligase that mediates ubiquitination of several tyrosine-phosphorylated Src substrates. Associated component of the WMM complex, a complex that mediates N6-methyladenosine (m6A) methylation of RNAs, a modification that plays a role in the efficiency of mRNA splicing and RNA processing. This Gallus gallus (Chicken) protein is E3 ubiquitin-protein ligase Hakai.